The chain runs to 423 residues: UPF0229 protein Pfl01_5140 (423 aa).

Positions 83–108 (TAGEHIARPPGGGGGRGPGKAGNSGE) are disordered. Over residues 92 to 107 (PGGGGGRGPGKAGNSG) the composition is skewed to gly residues.

This sequence belongs to the UPF0229 family.

The chain is UPF0229 protein Pfl01_5140 from Pseudomonas fluorescens (strain Pf0-1).